A 412-amino-acid polypeptide reads, in one-letter code: [Pyruvate dehydrogenase (acetyl-transferring)] kinase isozyme 4, mitochondrial (412 aa).

Residues 138–368 (ILEYKDTCTV…DAIIYLKALS (231 aa)) form the Histidine kinase domain. ATP contacts are provided by residues 254–261 (ELFKNAMR), D293, 312–313 (ST), and 329–334 (GFGYGL).

The protein belongs to the PDK/BCKDK protein kinase family. Homodimer. Interacts with the pyruvate dehydrogenase complex subunit DLAT, and is part of the multimeric pyruvate dehydrogenase complex that contains multiple copies of pyruvate dehydrogenase (E1), dihydrolipoamide acetyltransferase (DLAT, E2) and lipoamide dehydrogenase (DLD, E3).

The protein localises to the mitochondrion matrix. The catalysed reaction is L-seryl-[pyruvate dehydrogenase E1 alpha subunit] + ATP = O-phospho-L-seryl-[pyruvate dehydrogenase E1 alpha subunit] + ADP + H(+). Functionally, kinase that plays a key role in regulation of glucose and fatty acid metabolism and homeostasis via phosphorylation of the pyruvate dehydrogenase subunits PDHA1 and PDHA2. This inhibits pyruvate dehydrogenase activity, and thereby regulates metabolite flux through the tricarboxylic acid cycle, down-regulates aerobic respiration and inhibits the formation of acetyl-coenzyme A from pyruvate. Inhibition of pyruvate dehydrogenase decreases glucose utilization and increases fat metabolism in response to prolonged fasting and starvation. Plays an important role in maintaining normal blood glucose levels under starvation, and is involved in the insulin signaling cascade. Via its regulation of pyruvate dehydrogenase activity, plays an important role in maintaining normal blood pH and in preventing the accumulation of ketone bodies under starvation. In the fed state, mediates cellular responses to glucose levels and to a high-fat diet. Regulates both fatty acid oxidation and de novo fatty acid biosynthesis. Plays a role in the generation of reactive oxygen species. Protects detached epithelial cells against anoikis. Plays a role in cell proliferation via its role in regulating carbohydrate and fatty acid metabolism. The chain is [Pyruvate dehydrogenase (acetyl-transferring)] kinase isozyme 4, mitochondrial (Pdk4) from Mus musculus (Mouse).